The sequence spans 383 residues: Protein delta homolog 2 (383 aa).

An N-terminal signal peptide occupies residues 1 to 26 (MPSGCRCLHLVCLLCILGAPVKPARG). 4 consecutive EGF-like domains span residues 27–58 (NDCS…LHCE), 62–89 (RMPG…KFCD), 91–129 (DEHI…RDCE), and 131–172 (KAGP…ARCE). The Extracellular portion of the chain corresponds to 27–306 (NDCSSLCDLA…RQEAGLGEPS (280 aa)). 17 cysteine pairs are disulfide-bonded: Cys29–Cys40, Cys33–Cys46, Cys48–Cys57, Cys66–Cys71, Cys79–Cys88, Cys95–Cys107, Cys101–Cys117, Cys119–Cys128, Cys135–Cys148, Cys142–Cys160, Cys162–Cys171, Cys178–Cys189, Cys183–Cys198, Cys200–Cys209, Cys216–Cys227, Cys221–Cys236, and Cys238–Cys247. The N-linked (GlcNAc...) asparagine glycan is linked to Asn157. The 37-residue stretch at 174–210 (NVDDCLMRPCANGATCLDGINRFSCLCPEGFTGRFCT) folds into the EGF-like 5; calcium-binding domain. In terms of domain architecture, EGF-like 6; calcium-binding spans 212-248 (NLDDCASRPCQRGARCRDRVHDFDCLCPSGYGGKTCE). Residues 307-327 (LVAVVVFGAVTAALVLSTVLL) traverse the membrane as a helical segment. The Cytoplasmic segment spans residues 328-383 (TLRAWRRGFCPPGPCCYPAPHYAPARQDQECQVSMLPTGLPLPPDLPPEPGKTTAL). The tract at residues 364 to 383 (PTGLPLPPDLPPEPGKTTAL) is disordered. The span at 367–377 (LPLPPDLPPEP) shows a compositional bias: pro residues.

It is found in the membrane. In terms of biological role, regulates adipogenesis. The chain is Protein delta homolog 2 (DLK2) from Bos taurus (Bovine).